Reading from the N-terminus, the 352-residue chain is MLELNFSQTLGNHCLTINETLPANGITAIFGVSGAGKTSLINAISGLTRPQKGRIVLNGRVLNDAEKGICLTPEKRRVGYVFQDARLFPHYKVRGNLRYGMAKSMVDQFDKLVALLGIEPLLDRLPGSLSGGEKQRVAIGRALLTAPELLLLDEPLASLDIPRKRELLPYLQRLTREINIPMLYVSHSLDEILHLADRVMVLENGQVKAFGALEEVWGSSVMNPWLPKEQQSSILKVTVLEHHPHYAMTALALGDQHLWVNKLDEPLQAALRIRIQASDVSLVLQPPQQTSIRNVLRAKVVNSYDDNGQVEVELEVGGKTLWARISPWARDELVIKPGLWLYAQIKSVSITA.

The ABC transporter domain occupies 1–229 (MLELNFSQTL…SVMNPWLPKE (229 aa)). 31 to 38 (GVSGAGKT) serves as a coordination point for ATP. The 64-residue stretch at 289-352 (QTSIRNVLRA…AQIKSVSITA (64 aa)) folds into the Mop domain.

It belongs to the ABC transporter superfamily. Molybdate importer (TC 3.A.1.8) family. In terms of assembly, the complex is composed of two ATP-binding proteins (ModC), two transmembrane proteins (ModB) and a solute-binding protein (ModA).

It localises to the cell inner membrane. It catalyses the reaction molybdate(out) + ATP + H2O = molybdate(in) + ADP + phosphate + H(+). Functionally, part of the ABC transporter complex ModABC involved in molybdenum import. Responsible for energy coupling to the transport system. The protein is Molybdenum import ATP-binding protein ModC of Shigella dysenteriae serotype 1 (strain Sd197).